Reading from the N-terminus, the 141-residue chain is Small ribosomal subunit protein uS19 (141 aa).

The protein belongs to the universal ribosomal protein uS19 family.

Its function is as follows. Protein S19 forms a complex with S13 that binds strongly to the 16S ribosomal RNA. The protein is Small ribosomal subunit protein uS19 of Thermofilum pendens (strain DSM 2475 / Hrk 5).